Here is a 165-residue protein sequence, read N- to C-terminus: (2E)-enoyl-[ACP] glycyltransferase (165 aa).

The protein belongs to the FcoT family.

The enzyme catalyses a (3R)-3-[(carboxymethyl)amino]fatty acid + holo-[ACP] + H(+) = a (2E)-enoyl-[ACP] + glycine + H2O. It catalyses the reaction (3R)-3-[(carboxymethyl)amino]butanoate + holo-[ACP] + H(+) = (2E)-butenoyl-[ACP] + glycine + H2O. Its function is as follows. Involved in the biosynthesis of a unique class of isonitrile lipopeptides (INLPs). Catalyzes a Michael addition of glycine to the beta-position of an alpha,beta-unsaturated fatty acyl-[ACP], producing a (3R)-3-[(carboxymethyl)amino]fatty acid. Acts on the (2E)-butenoyl moiety loaded on the acyl-carrier protein ScoB, forming the product (3R)-3-[(carboxymethyl)amino]butanoate released from ScoB. The polypeptide is (2E)-enoyl-[ACP] glycyltransferase (Streptomyces coeruleorubidus).